We begin with the raw amino-acid sequence, 571 residues long: Proline--tRNA ligase (571 aa).

It belongs to the class-II aminoacyl-tRNA synthetase family. ProS type 1 subfamily. As to quaternary structure, homodimer.

The protein resides in the cytoplasm. It catalyses the reaction tRNA(Pro) + L-proline + ATP = L-prolyl-tRNA(Pro) + AMP + diphosphate. Functionally, catalyzes the attachment of proline to tRNA(Pro) in a two-step reaction: proline is first activated by ATP to form Pro-AMP and then transferred to the acceptor end of tRNA(Pro). As ProRS can inadvertently accommodate and process non-cognate amino acids such as alanine and cysteine, to avoid such errors it has two additional distinct editing activities against alanine. One activity is designated as 'pretransfer' editing and involves the tRNA(Pro)-independent hydrolysis of activated Ala-AMP. The other activity is designated 'posttransfer' editing and involves deacylation of mischarged Ala-tRNA(Pro). The misacylated Cys-tRNA(Pro) is not edited by ProRS. The protein is Proline--tRNA ligase of Pseudomonas putida (strain GB-1).